We begin with the raw amino-acid sequence, 491 residues long: Glutamyl-tRNA(Gln) amidotransferase subunit A (491 aa).

Catalysis depends on charge relay system residues K78 and S158. The active-site Acyl-ester intermediate is the S182.

The protein belongs to the amidase family. GatA subfamily. In terms of assembly, heterotrimer of A, B and C subunits.

The enzyme catalyses L-glutamyl-tRNA(Gln) + L-glutamine + ATP + H2O = L-glutaminyl-tRNA(Gln) + L-glutamate + ADP + phosphate + H(+). Allows the formation of correctly charged Gln-tRNA(Gln) through the transamidation of misacylated Glu-tRNA(Gln) in organisms which lack glutaminyl-tRNA synthetase. The reaction takes place in the presence of glutamine and ATP through an activated gamma-phospho-Glu-tRNA(Gln). The sequence is that of Glutamyl-tRNA(Gln) amidotransferase subunit A from Nitrobacter winogradskyi (strain ATCC 25391 / DSM 10237 / CIP 104748 / NCIMB 11846 / Nb-255).